The sequence spans 83 residues: Sulfur carrier protein TusA (83 aa).

Residue C19 is the Cysteine persulfide intermediate of the active site.

This sequence belongs to the sulfur carrier protein TusA family.

It localises to the cytoplasm. In terms of biological role, sulfur carrier protein which probably makes part of a sulfur-relay system. In Aliivibrio fischeri (strain ATCC 700601 / ES114) (Vibrio fischeri), this protein is Sulfur carrier protein TusA.